We begin with the raw amino-acid sequence, 88 residues long: Putative membrane protein insertion efficiency factor (88 aa).

A disordered region spans residues Leu-65–His-88. Residues Pro-69–His-80 are compositionally biased toward basic and acidic residues.

The protein belongs to the UPF0161 family.

It localises to the cell membrane. In terms of biological role, could be involved in insertion of integral membrane proteins into the membrane. This Listeria innocua serovar 6a (strain ATCC BAA-680 / CLIP 11262) protein is Putative membrane protein insertion efficiency factor.